A 220-amino-acid chain; its full sequence is Aklanonic acid methyltransferase DauC (220 aa).

The protein belongs to the methyltransferase superfamily. DnrC family. Homodimer.

It catalyses the reaction aklanonate + S-adenosyl-L-methionine = methyl aklanonate + S-adenosyl-L-homocysteine. It participates in antibiotic biosynthesis; daunorubicin biosynthesis. Its pathway is antibiotic biosynthesis; carminomycin biosynthesis. The protein operates within antibiotic biosynthesis; rhodomycin biosynthesis. It functions in the pathway antibiotic biosynthesis; aclacinomycin biosynthesis. Involved in the biosynthesis of aklavinone which is an important precursor common to the formation of the clinically significant anthracyclines such as carminomycin, daunorubicin (daunomycin), rhodomycin, aclacinomycin T (aklavin) and aclacinomycin A (aclarubicin). These compounds are aromatic polyketide antibiotics that exhibit high cytotoxicity and are widely applied in the chemotherapy of a variety of cancers. Catalyzes the methyl esterification of aklanonic acid to yield aklanonic acid methyl ester. The polypeptide is Aklanonic acid methyltransferase DauC (dauC) (Streptomyces sp. (strain C5)).